Reading from the N-terminus, the 196-residue chain is Phosphoheptose isomerase (196 aa).

Residues 36 to 196 (MVACLMNEGK…AVDYMLLGGD (161 aa)) form the SIS domain. 51 to 53 (NGG) lines the substrate pocket. Zn(2+) is bound by residues His-60 and Glu-64. Residues Glu-64, 93–94 (ND), 119–121 (STS), Ser-124, and Gln-174 contribute to the substrate site. Zn(2+) contacts are provided by Gln-174 and His-182.

Belongs to the SIS family. GmhA subfamily. As to quaternary structure, homotetramer. Zn(2+) serves as cofactor.

It is found in the cytoplasm. The enzyme catalyses 2 D-sedoheptulose 7-phosphate = D-glycero-alpha-D-manno-heptose 7-phosphate + D-glycero-beta-D-manno-heptose 7-phosphate. Its pathway is carbohydrate biosynthesis; D-glycero-D-manno-heptose 7-phosphate biosynthesis; D-glycero-alpha-D-manno-heptose 7-phosphate and D-glycero-beta-D-manno-heptose 7-phosphate from sedoheptulose 7-phosphate: step 1/1. In terms of biological role, catalyzes the isomerization of sedoheptulose 7-phosphate in D-glycero-D-manno-heptose 7-phosphate. The sequence is that of Phosphoheptose isomerase from Laribacter hongkongensis (strain HLHK9).